We begin with the raw amino-acid sequence, 339 residues long: Glyoxylate reductase (339 aa).

NADP(+) contacts are provided by residues 157 to 160 (LGRI) and 239 to 241 (TAR). Residues arginine 241 and glutamate 270 contribute to the active site. Catalysis depends on histidine 289, which acts as the Proton donor. 289–291 (HIA) provides a ligand contact to NADP(+).

Belongs to the D-isomer specific 2-hydroxyacid dehydrogenase family. GyaR subfamily. As to quaternary structure, homodimer.

It is found in the cytoplasm. The enzyme catalyses glycolate + NAD(+) = glyoxylate + NADH + H(+). The chain is Glyoxylate reductase from Thermofilum pendens (strain DSM 2475 / Hrk 5).